Reading from the N-terminus, the 237-residue chain is Phosphatidylserine decarboxylase proenzyme (237 aa).

The active-site Schiff-base intermediate with substrate; via pyruvic acid is Ser206. Position 206 is a pyruvic acid (Ser); by autocatalysis (Ser206).

This sequence belongs to the phosphatidylserine decarboxylase family. PSD-A subfamily. As to quaternary structure, heterodimer of a large membrane-associated beta subunit and a small pyruvoyl-containing alpha subunit. It depends on pyruvate as a cofactor. Is synthesized initially as an inactive proenzyme. Formation of the active enzyme involves a self-maturation process in which the active site pyruvoyl group is generated from an internal serine residue via an autocatalytic post-translational modification. Two non-identical subunits are generated from the proenzyme in this reaction, and the pyruvate is formed at the N-terminus of the alpha chain, which is derived from the carboxyl end of the proenzyme. The post-translation cleavage follows an unusual pathway, termed non-hydrolytic serinolysis, in which the side chain hydroxyl group of the serine supplies its oxygen atom to form the C-terminus of the beta chain, while the remainder of the serine residue undergoes an oxidative deamination to produce ammonia and the pyruvoyl prosthetic group on the alpha chain.

The protein localises to the cell membrane. The enzyme catalyses a 1,2-diacyl-sn-glycero-3-phospho-L-serine + H(+) = a 1,2-diacyl-sn-glycero-3-phosphoethanolamine + CO2. The protein operates within phospholipid metabolism; phosphatidylethanolamine biosynthesis; phosphatidylethanolamine from CDP-diacylglycerol: step 2/2. Catalyzes the formation of phosphatidylethanolamine (PtdEtn) from phosphatidylserine (PtdSer). This is Phosphatidylserine decarboxylase proenzyme from Rhodococcus opacus (strain B4).